The primary structure comprises 245 residues: Small ribosomal subunit protein uS2 (245 aa).

It belongs to the universal ribosomal protein uS2 family.

This chain is Small ribosomal subunit protein uS2, found in Pseudomonas putida (strain ATCC 47054 / DSM 6125 / CFBP 8728 / NCIMB 11950 / KT2440).